A 500-amino-acid polypeptide reads, in one-letter code: Amino-acid acetyltransferase, mitochondrial (500 aa).

The N-terminal 19 residues, 1–19 (MQKPSLSQDLIWILKSVQS), are a transit peptide targeting the mitochondrion. The region spanning 336-496 (FLGPKCLTDG…YMSVIDKIQP (161 aa)) is the N-acetyltransferase domain.

This sequence belongs to the acetyltransferase family.

It localises to the mitochondrion. The enzyme catalyses L-glutamate + acetyl-CoA = N-acetyl-L-glutamate + CoA + H(+). Its pathway is amino-acid biosynthesis; L-arginine biosynthesis; N(2)-acetyl-L-ornithine from L-glutamate: step 1/4. N-acetylglutamate synthase involved in arginine biosynthesis. This Schizosaccharomyces pombe (strain 972 / ATCC 24843) (Fission yeast) protein is Amino-acid acetyltransferase, mitochondrial (arg6).